The following is a 338-amino-acid chain: MSSQNLERQRIYQVWPAKNKFYCGGRLVFGPDASSLLLTTCMIGGPAIAFSIRMAYLISHRHPFFHSLTLIGAILLTFMAFTFLFLTSSRDPGIIPRNKQVSEAEIPDVTTQSTEWVTSKLGSVKLPRTKDVMVNGFTVKVKFCDTCQLYRPPRAFHCSICNNCVQRFDHHCPWVGQCIALRNYPFFVCFLSCSTLLCIYVFVFSWVSMLKVHGEFYVVLADDLILGVLGLYCFVSVWFVGGLTVFHFYLICTNQTTCENFRYHYDKKENPYRKGILENFKELFFAKIPPPLINFRDWSPEEEDDVEVGSIASELVRAFGPKDTKMSSGKSDSEARER.

The next 2 helical transmembrane spans lie at 32–52 (DASS…AFSI) and 68–88 (LTLI…FLTS). Residues 142–192 (KFCDTCQLYRPPRAFHCSICNNCVQRFDHHCPWVGQCIALRNYPFFVCFLS) form the DHHC domain. The active-site S-palmitoyl cysteine intermediate is Cys-172. The next 2 membrane-spanning stretches (helical) occupy residues 186-206 (FFVC…VFSW) and 225-245 (ILGV…GLTV). The tract at residues 319-338 (FGPKDTKMSSGKSDSEARER) is disordered. The segment covering 320–338 (GPKDTKMSSGKSDSEARER) has biased composition (basic and acidic residues).

This sequence belongs to the DHHC palmitoyltransferase family.

It localises to the endosome membrane. The catalysed reaction is L-cysteinyl-[protein] + hexadecanoyl-CoA = S-hexadecanoyl-L-cysteinyl-[protein] + CoA. Its function is as follows. Palmitoyl acyltransferase. This is Probable protein S-acyltransferase 1 (PAT01) from Arabidopsis thaliana (Mouse-ear cress).